A 197-amino-acid polypeptide reads, in one-letter code: dTTP/UTP pyrophosphatase (197 aa).

The Proton acceptor role is filled by aspartate 70.

It belongs to the Maf family. YhdE subfamily. A divalent metal cation serves as cofactor.

Its subcellular location is the cytoplasm. It carries out the reaction dTTP + H2O = dTMP + diphosphate + H(+). It catalyses the reaction UTP + H2O = UMP + diphosphate + H(+). In terms of biological role, nucleoside triphosphate pyrophosphatase that hydrolyzes dTTP and UTP. May have a dual role in cell division arrest and in preventing the incorporation of modified nucleotides into cellular nucleic acids. The chain is dTTP/UTP pyrophosphatase (yceF2) from Escherichia coli O6:K15:H31 (strain 536 / UPEC).